The following is a 509-amino-acid chain: Putative (R)-citramalate synthase CimA (509 aa).

Positions 14 to 267 (VRIFDTTLRD…DTGIRTERLT (254 aa)) constitute a Pyruvate carboxyltransferase domain.

It belongs to the alpha-IPM synthase/homocitrate synthase family. Homodimer.

It catalyses the reaction pyruvate + acetyl-CoA + H2O = (3R)-citramalate + CoA + H(+). It participates in amino-acid biosynthesis; L-isoleucine biosynthesis; 2-oxobutanoate from pyruvate: step 1/3. Its function is as follows. Catalyzes the condensation of pyruvate and acetyl-coenzyme A to form (R)-citramalate. This is Putative (R)-citramalate synthase CimA (cimA) from Methanopyrus kandleri (strain AV19 / DSM 6324 / JCM 9639 / NBRC 100938).